A 233-amino-acid polypeptide reads, in one-letter code: Putative nosiheptide resistance regulatory protein (233 aa).

The segment at residues 93–112 is a DNA-binding region (H-T-H motif); that stretch reads RKAARQAADYSRPMIEQAVA. Residues 190-233 are disordered; it reads PPEATEVPESGRLTSVDGSAEAVLDPEVQAKEAAEEAAKRDDQA. Basic and acidic residues predominate over residues 217-233; sequence VQAKEAAEEAAKRDDQA.

In terms of biological role, seems to be involved in the regulation of nhs expression. This chain is Putative nosiheptide resistance regulatory protein, found in Streptomyces actuosus.